We begin with the raw amino-acid sequence, 315 residues long: Secreted frizzled-related protein 5 (315 aa).

The first 27 residues, 1-27, serve as a signal peptide directing secretion; the sequence is MRAAAGGARAAVLALLLGALHGAPARG. The FZ domain occupies 46 to 163; that stretch reads SKPPQCLDIP…PLDNDLCIAV (118 aa). 8 cysteine pairs are disulfide-bonded: Cys51–Cys114, Cys61–Cys107, Cys98–Cys133, Cys122–Cys160, Cys126–Cys150, Cys179–Cys251, Cys182–Cys253, and Cys196–Cys301. The region spanning 179–301 is the NTR domain; the sequence is CAQCEMEHSA…AVKFMFSYPC (123 aa).

This sequence belongs to the secreted frizzled-related protein (sFRP) family. Strongly expressed in the retinal pigment epithelium (RPE). Weak expression in retina, brain, heart, liver, kidney, testis and muscle.

It localises to the secreted. Soluble frizzled-related proteins (sFRPS) function as modulators of Wnt signaling through direct interaction with Wnts. They have a role in regulating cell growth and differentiation in specific cell types. SFRP5 may be involved in determining the polarity of photoreceptor, and perhaps other, cells in the retina. Inhibits Wnt8 signaling, in vitro. The chain is Secreted frizzled-related protein 5 (SFRP5) from Bos taurus (Bovine).